We begin with the raw amino-acid sequence, 292 residues long: Transforming growth factor-beta receptor type 3-like protein (292 aa).

The signal sequence occupies residues 1–16 (MLGTVLLLALLPGITT). A ZP; truncated domain is found at 17 to 170 (LPSGPPAPPF…APAPLTPPPP (154 aa)). The Extracellular portion of the chain corresponds to 17–244 (LPSGPPAPPF…PAPAALEPAP (228 aa)). An intrachain disulfide couples cysteine 85 to cysteine 147. The tract at residues 160-236 (RAPAPLTPPP…AVRPEPPAPA (77 aa)) is disordered. Pro residues-rich tracts occupy residues 164 to 175 (PLTPPPPPPPSR) and 213 to 222 (PRPPPRPPKS). The chain crosses the membrane as a helical span at residues 245 to 265 (VVALVLAAFVLGAALAAGLGL). The Cytoplasmic segment spans residues 266–292 (VCAHSAPHAPGPPARASPSGPQPRRSQ). The disordered stretch occupies residues 273 to 292 (HAPGPPARASPSGPQPRRSQ). Positions 281 to 292 (ASPSGPQPRRSQ) are enriched in low complexity.

Glycosylated. As to expression, expressed in pituitary gland gonadotrope cells.

The protein resides in the cell membrane. Functionally, expressed in gonadotrope cells, acts as an inhibin B coreceptor and regulates follicle-stimulating hormone (FSH) levels and female fertility. The protein is Transforming growth factor-beta receptor type 3-like protein of Homo sapiens (Human).